A 105-amino-acid chain; its full sequence is uncharacterized protein (105 aa).

This is an uncharacterized protein from Acidianus bottle-shaped virus (isolate Italy/Pozzuoli) (ABV).